The following is a 209-amino-acid chain: Claudin-4 (209 aa).

Topologically, residues 1–9 (MASMGLQVM) are cytoplasmic. Residues 1 to 103 (MASMGLQVMG…GVLLSVVGGK (103 aa)) form an interaction with EPHA2 region. Residues 10–30 (GIALAVLGWLGAILSCALPMW) traverse the membrane as a helical segment. At 31 to 81 (RVTAFIGSNIVTSQTIWEGLWMNCVVQSTGQMQCKVYDSLLALPQDLQAAR) the chain is on the extracellular side. The cysteines at positions 54 and 64 are disulfide-linked. Residues 82 to 102 (ALIVICIILAVFGVLLSVVGG) form a helical membrane-spanning segment. Topologically, residues 103 to 117 (KCTNCVDDESSKAKI) are cytoplasmic. Residues 118–138 (MIVAGVVFLLAGLLVMVPVSW) traverse the membrane as a helical segment. Topologically, residues 139-160 (TANNVIRDFYNPLVASGQKREM) are extracellular. Residues 161 to 181 (GASLYVGWAAAGLLILGGALL) form a helical membrane-spanning segment. Residues 182–209 (CFNCPPRNDKPYSAKYSAARSAPASNYV) lie on the Cytoplasmic side of the membrane. Y208 carries the phosphotyrosine; by EPHA2 modification. An interactions with TJP1, TJP2 and TJP3 region spans residues 208 to 209 (YV).

The protein belongs to the claudin family. In terms of assembly, interacts with EPHA2; phosphorylates CLDN4 and may regulate tight junctions. Directly interacts with TJP1/ZO-1, TJP2/ZO-2 and TJP3/ZO-3. Interacts with CLDN1. Interacts with CLDN8. In terms of processing, phosphorylated. Phosphorylation by EPHA2 is stimulated by EFNA1 and alters interaction with TJP1.

The protein resides in the cell junction. Its subcellular location is the tight junction. The protein localises to the cell membrane. Its function is as follows. Channel-forming tight junction protein that mediates paracellular chloride transport in the kidney. Plays a critical role in the paracellular reabsorption of filtered chloride in the kidney collecting ducts. Claudins play a major role in tight junction-specific obliteration of the intercellular space, through calcium-independent cell-adhesion activity. This is Claudin-4 (CLDN4) from Bos taurus (Bovine).